The sequence spans 189 residues: Large ribosomal subunit protein eL18 (189 aa).

It belongs to the eukaryotic ribosomal protein eL18 family.

Its subcellular location is the cytoplasm. The chain is Large ribosomal subunit protein eL18 (RpL18) from Aedes aegypti (Yellowfever mosquito).